A 189-amino-acid polypeptide reads, in one-letter code: GTPase NRas (189 aa).

GTP is bound by residues 10–18 (GAGGVGKSA) and 29–30 (VD). The Effector region signature appears at 32–40 (YDPTIEDSY). Position 57–61 (57–61 (DTAGQ)) interacts with GTP. Serine 89 bears the Phosphoserine mark. 116–119 (NKCD) contacts GTP. The interval 166-185 (YRLKKLNSSDDGTQGCMGSP) is hypervariable region. Residue lysine 170 forms a Glycyl lysine isopeptide (Lys-Gly) (interchain with G-Cter in ubiquitin) linkage. Cysteine 181 carries the S-palmitoyl cysteine lipid modification. Residue cysteine 186 is the site of S-farnesyl cysteine attachment. Positions 187 to 189 (VLM) are cleaved as a propeptide — removed in mature form.

This sequence belongs to the small GTPase superfamily. Ras family. As to quaternary structure, interacts (active GTP-bound form preferentially) with RGS14. Interacts (active GTP-bound form) with RASSF7. Interacts (active GTP-bound form) with both SHOC2 and PP1c (all isoforms) to form a tertiary complex; SHOC2 and PP1c preferably bind M-Ras/MRAS, but they also bind K-Ras/KRAS, N-Ras/NRAS and H-Ras/HRAS. Palmitoylated by the ZDHHC9-GOLGA7 complex. Depalmitoylated by ABHD17A, ABHD17B and ABHD17C. A continuous cycle of de- and re-palmitoylation regulates rapid exchange between plasma membrane and Golgi. In terms of processing, acetylation at Lys-104 prevents interaction with guanine nucleotide exchange factors (GEFs). Post-translationally, ubiquitinated by the BCR(LZTR1) E3 ubiquitin ligase complex at Lys-170 in a non-degradative manner, leading to inhibit Ras signaling by decreasing Ras association with membranes. Phosphorylation at Ser-89 enhances NRAS association with its downstream effectors.

It is found in the cell membrane. The protein resides in the golgi apparatus membrane. It carries out the reaction GTP + H2O = GDP + phosphate + H(+). Its activity is regulated as follows. Alternates between an inactive form bound to GDP and an active form bound to GTP. Activated by a guanine nucleotide-exchange factor (GEF) and inactivated by a GTPase-activating protein (GAP). Ras proteins bind GDP/GTP and possess intrinsic GTPase activity. In Mus musculus (Mouse), this protein is GTPase NRas (Nras).